Here is a 440-residue protein sequence, read N- to C-terminus: Gap junction alpha-8 protein (440 aa).

An intramembrane segment occupies glycine 2–glutamate 12. Over glutamate 13–isoleucine 21 the chain is Cytoplasmic. Residues glycine 22 to glutamate 42 form a helical membrane-spanning segment. Residues phenylalanine 43–proline 71 are Extracellular-facing. 3 disulfide bridges follow: cysteine 54-cysteine 201, cysteine 61-cysteine 195, and cysteine 65-cysteine 190. The helical transmembrane segment at isoleucine 72–tyrosine 92 threads the bilayer. The Cytoplasmic segment spans residues valine 93 to histidine 161. The tract at residues alanine 111–lysine 143 is disordered. Residues isoleucine 162 to phenylalanine 182 traverse the membrane as a helical segment. The Extracellular segment spans residues arginine 183 to threonine 210. A helical transmembrane segment spans residues isoleucine 211 to methionine 231. Residues serine 232 to isoleucine 440 are Cytoplasmic-facing. The disordered stretch occupies residues valine 338–isoleucine 440. Composition is skewed to basic and acidic residues over residues valine 353–alanine 364 and proline 374–threonine 399. The segment covering leucine 423–arginine 432 has biased composition (low complexity).

Belongs to the connexin family. Alpha-type (group II) subfamily. In terms of assembly, a hemichannel or connexon is composed of a hexamer of connexins. A functional gap junction is formed by the apposition of two hemichannels. Forms heteromeric channels with GJA3. As to expression, detected in eye lens (at protein level). Eye lens.

The protein resides in the cell membrane. Its subcellular location is the cell junction. It localises to the gap junction. In terms of biological role, structural component of eye lens gap junctions. Gap junctions are dodecameric channels that connect the cytoplasm of adjoining cells. They are formed by the docking of two hexameric hemichannels, one from each cell membrane. Small molecules and ions diffuse from one cell to a neighboring cell via the central pore. This chain is Gap junction alpha-8 protein (Gja8), found in Mus musculus (Mouse).